The primary structure comprises 298 residues: Triosephosphate isomerase, chloroplastic (298 aa).

Residues 1–18 are compositionally biased toward pro residues; the sequence is MAARRPSPPPASPPPPRP. Residues 1–32 form a disordered region; that stretch reads MAARRPSPPPASPPPPRPRSTTTTRTTSSASA. Residues 1-43 constitute a chloroplast transit peptide; it reads MAARRPSPPPASPPPPRPRSTTTTRTTSSASAAPAAAQRLVAM. The segment covering 19–32 has biased composition (low complexity); that stretch reads RSTTTTRTTSSASA. Asn54 and Lys56 together coordinate substrate. The Electrophile role is filled by His138. Cys186 bears the Cysteine derivative mark. The active-site Proton acceptor is Glu208.

This sequence belongs to the triosephosphate isomerase family. Homodimer.

Its subcellular location is the plastid. The protein localises to the chloroplast. It carries out the reaction D-glyceraldehyde 3-phosphate = dihydroxyacetone phosphate. The protein operates within carbohydrate biosynthesis; Calvin cycle. This is Triosephosphate isomerase, chloroplastic from Secale cereale (Rye).